Consider the following 402-residue polypeptide: Zinc finger protein 809 (402 aa).

One can recognise a KRAB domain in the interval 4–75; it reads VSFEDVAVDF…AEASSRSLPG (72 aa). Residues 118-139 are disordered; it reads QEVSKGTTSRHRRAPVKSLCRK. Residues 125-139 are compositionally biased toward basic residues; it reads TSRHRRAPVKSLCRK. C2H2-type zinc fingers lie at residues 155 to 178, 184 to 206, 213 to 235, 241 to 263, 269 to 291, 297 to 319, and 325 to 347; these read YECK…RRTH, YECD…QKTH, YECS…ERTH, YECT…KKTH, FKCE…QKKH, YECT…RIAH, and YECK…QKRH.

Belongs to the krueppel C2H2-type zinc-finger protein family.

It is found in the nucleus. Functionally, transcription factor specifically required to repress retrotransposons in embryonic stem cells. Recognizes and binds retroviral DNA sequences from a large subset of mammalian retroviruses and retroelements and repress their expression by recruiting a repressive complex containing TRIM28/KAP1. This chain is Zinc finger protein 809, found in Mus musculus (Mouse).